Consider the following 199-residue polypeptide: Pyridoxal 5'-phosphate synthase subunit PdxT (199 aa).

49–51 contributes to the L-glutamine binding site; it reads GES. Cysteine 81 functions as the Nucleophile in the catalytic mechanism. Residues arginine 110 and 139 to 140 contribute to the L-glutamine site; that span reads IR. Residues histidine 175 and glutamate 177 each act as charge relay system in the active site.

It belongs to the glutaminase PdxT/SNO family. In the presence of PdxS, forms a dodecamer of heterodimers. Only shows activity in the heterodimer.

The enzyme catalyses aldehydo-D-ribose 5-phosphate + D-glyceraldehyde 3-phosphate + L-glutamine = pyridoxal 5'-phosphate + L-glutamate + phosphate + 3 H2O + H(+). The catalysed reaction is L-glutamine + H2O = L-glutamate + NH4(+). Its pathway is cofactor biosynthesis; pyridoxal 5'-phosphate biosynthesis. Catalyzes the hydrolysis of glutamine to glutamate and ammonia as part of the biosynthesis of pyridoxal 5'-phosphate. The resulting ammonia molecule is channeled to the active site of PdxS. This is Pyridoxal 5'-phosphate synthase subunit PdxT from Frankia casuarinae (strain DSM 45818 / CECT 9043 / HFP020203 / CcI3).